A 234-amino-acid polypeptide reads, in one-letter code: Glucosamine-6-phosphate deaminase (234 aa).

The Proton acceptor; for enolization step role is filled by D62. Catalysis depends on N128, which acts as the For ring-opening step. Catalysis depends on H130, which acts as the Proton acceptor; for ring-opening step. The active-site For ring-opening step is the E135.

This sequence belongs to the glucosamine/galactosamine-6-phosphate isomerase family. NagB subfamily.

It carries out the reaction alpha-D-glucosamine 6-phosphate + H2O = beta-D-fructose 6-phosphate + NH4(+). It functions in the pathway amino-sugar metabolism; N-acetylneuraminate degradation; D-fructose 6-phosphate from N-acetylneuraminate: step 5/5. Functionally, catalyzes the reversible isomerization-deamination of glucosamine 6-phosphate (GlcN6P) to form fructose 6-phosphate (Fru6P) and ammonium ion. This chain is Glucosamine-6-phosphate deaminase, found in Streptococcus suis (strain 98HAH33).